The chain runs to 186 residues: Elongation factor P (186 aa).

Belongs to the elongation factor P family.

It localises to the cytoplasm. The protein operates within protein biosynthesis; polypeptide chain elongation. In terms of biological role, involved in peptide bond synthesis. Stimulates efficient translation and peptide-bond synthesis on native or reconstituted 70S ribosomes in vitro. Probably functions indirectly by altering the affinity of the ribosome for aminoacyl-tRNA, thus increasing their reactivity as acceptors for peptidyl transferase. This Cupriavidus metallidurans (strain ATCC 43123 / DSM 2839 / NBRC 102507 / CH34) (Ralstonia metallidurans) protein is Elongation factor P.